We begin with the raw amino-acid sequence, 98 residues long: NADH-ubiquinone oxidoreductase chain 4L (98 aa).

Helical transmembrane passes span methionine 1–valine 21, leucine 30–isoleucine 50, and isoleucine 61–valine 81.

This sequence belongs to the complex I subunit 4L family. In terms of assembly, core subunit of respiratory chain NADH dehydrogenase (Complex I) which is composed of 45 different subunits.

It localises to the mitochondrion inner membrane. The catalysed reaction is a ubiquinone + NADH + 5 H(+)(in) = a ubiquinol + NAD(+) + 4 H(+)(out). Its function is as follows. Core subunit of the mitochondrial membrane respiratory chain NADH dehydrogenase (Complex I) which catalyzes electron transfer from NADH through the respiratory chain, using ubiquinone as an electron acceptor. Part of the enzyme membrane arm which is embedded in the lipid bilayer and involved in proton translocation. This chain is NADH-ubiquinone oxidoreductase chain 4L (MT-ND4L), found in Pagophilus groenlandicus (Harp seal).